We begin with the raw amino-acid sequence, 318 residues long: Actin-related protein 2/3 complex subunit 2A (318 aa).

The interval 297 to 318 is disordered; that stretch reads RSMNNKSFKRLGLNEVNHTNSK.

The protein belongs to the ARPC2 family. As to quaternary structure, component of the Arp2/3 complex composed of ARP2, ARP3, ARPC1/p41-ARC, ARPC2/p34-ARC, ARPC3/p21-ARC, ARPC4/p20-ARC and ARPC5/p16-ARC. Interacts with ARPC4. As to expression, expressed at low levels in all tissues with a relatively highest expression in inflorescences.

It localises to the cytoplasm. The protein resides in the cytoskeleton. Its subcellular location is the cell projection. Its function is as follows. Functions as actin-binding component of the Arp2/3 complex which is involved in regulation of actin polymerization and together with an activating nucleation-promoting factor (NPF) mediates the formation of branched actin networks. Seems to contact the mother actin filament. Arp2/3 complex plays a critical role in the control of cell morphogenesis via the modulation of cell polarity development. The chain is Actin-related protein 2/3 complex subunit 2A (ARPC2A) from Arabidopsis thaliana (Mouse-ear cress).